A 156-amino-acid polypeptide reads, in one-letter code: ATP synthase subunit b (156 aa).

A helical transmembrane segment spans residues 5-27 (ITLIGQMITFAIFVGFTMKFVWP).

This sequence belongs to the ATPase B chain family. F-type ATPases have 2 components, F(1) - the catalytic core - and F(0) - the membrane proton channel. F(1) has five subunits: alpha(3), beta(3), gamma(1), delta(1), epsilon(1). F(0) has three main subunits: a(1), b(2) and c(10-14). The alpha and beta chains form an alternating ring which encloses part of the gamma chain. F(1) is attached to F(0) by a central stalk formed by the gamma and epsilon chains, while a peripheral stalk is formed by the delta and b chains.

The protein resides in the cell inner membrane. Functionally, f(1)F(0) ATP synthase produces ATP from ADP in the presence of a proton or sodium gradient. F-type ATPases consist of two structural domains, F(1) containing the extramembraneous catalytic core and F(0) containing the membrane proton channel, linked together by a central stalk and a peripheral stalk. During catalysis, ATP synthesis in the catalytic domain of F(1) is coupled via a rotary mechanism of the central stalk subunits to proton translocation. In terms of biological role, component of the F(0) channel, it forms part of the peripheral stalk, linking F(1) to F(0). The chain is ATP synthase subunit b from Francisella tularensis subsp. tularensis (strain SCHU S4 / Schu 4).